The primary structure comprises 72 residues: Small, acid-soluble spore protein C (72 aa).

The protein belongs to the alpha/beta-type SASP family.

Functionally, SASP are bound to spore DNA. They are double-stranded DNA-binding proteins that cause DNA to change to an a-like conformation. They protect the DNA backbone from chemical and enzymatic cleavage and are thus involved in dormant spore's high resistance to UV light. The protein is Small, acid-soluble spore protein C (sspC) of Bacillus subtilis (strain 168).